Here is a 968-residue protein sequence, read N- to C-terminus: RNA polymerase-associated protein RapA (968 aa).

The 171-residue stretch at 164 to 334 folds into the Helicase ATP-binding domain; that stretch reads DVGRRHAPRV…FARLRLLDPN (171 aa). 177–184 contributes to the ATP binding site; sequence DEVGLGKT. The short motif at 280–283 is the DEAH box element; the sequence is DEAH. Positions 490–662 constitute a Helicase C-terminal domain; it reads RVEWLMGYLT…YLASPDQTEG (173 aa).

The protein belongs to the SNF2/RAD54 helicase family. RapA subfamily. Interacts with the RNAP. Has a higher affinity for the core RNAP than for the holoenzyme. Its ATPase activity is stimulated by binding to RNAP.

Transcription regulator that activates transcription by stimulating RNA polymerase (RNAP) recycling in case of stress conditions such as supercoiled DNA or high salt concentrations. Probably acts by releasing the RNAP, when it is trapped or immobilized on tightly supercoiled DNA. Does not activate transcription on linear DNA. Probably not involved in DNA repair. In Shigella flexneri serotype 5b (strain 8401), this protein is RNA polymerase-associated protein RapA.